The sequence spans 539 residues: Cytochrome c oxidase subunit 1 homolog, bacteroid (539 aa).

A run of 3 helical transmembrane segments spans residues 4-24 (TVEMVVLSVGAFLALVGAGLA), 28-48 (LFGAHMWVLFFALLAGTLVLM), and 75-95 (GVVATVFWGVVGFLVGVVVAL). H117 serves as a coordination point for heme b. Transmembrane regions (helical) follow at residues 118 to 138 (TSAVIFAFGGNALIATSFYVV), 154 to 174 (FVFWGYQLFIVLAASGYLLGI), 187 to 207 (VDLWLTIVWVAYLVAFLGTIM), 214 to 234 (IYVANWFYLAFIVTIAMLHVV), 265 to 285 (GHNAVGFFLTAGFLAMMYYFI), 298 to 318 (LSIIHFWAIIFMYIWAGPHHL), 330 to 350 (LGMVFSIMLWMPSWGGMINGL), and 368 to 388 (MMVMAVAFYGMATFEGPMMSI). H266, H316, and H317 together coordinate Cu cation. Heme b-binding residues include H404 and H406. The next 4 membrane-spanning stretches (helical) occupy residues 405–425 (VHSGALGWNGLITFGAIYYLV), 443–463 (HFWLATLGIVVYAAVMWVAGI), 475–495 (QGFLVYSFAETVAAMFPYYVM), and 499–519 (GGALFLAGALLMAFNVTMTIL).

It belongs to the heme-copper respiratory oxidase family. Cu(2+) serves as cofactor. Heme b is required as a cofactor.

It is found in the cell membrane. It carries out the reaction 4 Fe(II)-[cytochrome c] + O2 + 8 H(+)(in) = 4 Fe(III)-[cytochrome c] + 2 H2O + 4 H(+)(out). Its pathway is energy metabolism; oxidative phosphorylation. Cytochrome c oxidase is the component of the respiratory chain that catalyzes the reduction of oxygen to water. Subunits 1-3 form the functional core of the enzyme complex. Co I is the catalytic subunit of the enzyme. Electrons originating in cytochrome c or a quinol are transferred to the bimetallic center formed by a high-spin heme and copper B. The polypeptide is Cytochrome c oxidase subunit 1 homolog, bacteroid (fixN) (Rhizobium meliloti (strain 1021) (Ensifer meliloti)).